A 1375-amino-acid chain; its full sequence is uncharacterized protein (1375 aa).

The region spanning Leu277–Ser476 is the Helicase ATP-binding domain. Residue Asp290–Thr297 participates in ATP binding. The RING-type zinc-finger motif lies at Cys1092–Lys1130. The 147-residue stretch at Thr1190–Pro1336 folds into the Helicase C-terminal domain.

The protein belongs to the SNF2/RAD54 helicase family.

The protein resides in the nucleus. This is an uncharacterized protein from Schizosaccharomyces pombe (strain 972 / ATCC 24843) (Fission yeast).